A 1519-amino-acid polypeptide reads, in one-letter code: MEMETKAGKQKKRSVDSDDDVSKERRPKRAAACTNFKEKSLRISDKSETVEAKKEQILAEEIVAIQLTSSLESNDDPRPNRRLTDFVLHDSEGVPQPVEMLELGDIFIEGVVLPLGDEKKEEKGVRFQSFGRVENWNISGYEDGSPVIWISTALADYDCRKPSKKYKKLYDYFFEKACACVEVFKSLSKNPDTSLDELLAAVSRSMSGSKIFSSGGAIQEFVISQGEFIYNQLAGLDETAKNHETCFVENRVLVSLRDHESNKIHKALSNVALRIDESKVVTSDHLVDGAEDEDVKYAKLIQEEEYRKSMERSRNKRSSTTSGGSSRFYIKISEDEIADDYPLPSYYKNTKEETDELVLFEAGYEVDTRDLPCRTLHNWTLYNSDSRMISLEVLPMRPCAEIDVTVFGSGVVAEDDGSGFCLDDSESSTSTQSNDHDGMNIFLSQIKEWMIEFGAEMIFVTLRTDMAWYRLGKPSKQYAPWFGTVMKTVRVGISIFNMLMRESRVAKLSYANVIKRLCGLEENDKAYISSKLLDVERYVVVHGQIILQLFEEYPDKDIKRCPFVTSLASKMQDIHHTKWIIKKKKKILQKGKNLNPRAGIAPVVSRMKAMQATTTRLVNRIWGEFYSIYSPEVPSEAINAENVEEEELEEVEEEDENEEDDPEENELEAVEIQNSPTPKKIKGISEDMEIKWDGEILGKTSAGEPLYGRAFVGGDVVVVGSAVILEVDDQDDTQLICFVEFMFESSNHSKMLHGKLLQRGSETVLGMAANERELFLTNECLTVQLKDIKGTVSLEIRSRLWGHQYRKENIDVDKLDRARAEERKTNGLPTDYYCKSLYSPERGGFFSLPRNDMGLGSGFCSSCKIRENEEERSKTKLNDSKTGFLSNGIEYHNGDFVYVLPNYITKDGLKKGSRRTTLKCGRNVGLKAFVVCQLLDVIVLEESRKASKASFQVKLTRFYRPEDISEEKAYASDIQELYYSQDTYILPPEAIQGKCEVRKKSDMPLCREYPILDHIFFCEVFYDSSTGYLKQFPANMKLKFSTIKDETLLREKKGKGVETGTSSGMLMKPDEVPKEKPLATLDIFAGCGGLSHGLENAGVSTTKWAIEYEEPAGHAFKQNHPEATVFVDNCNVILRAIMEKCGDVDDCVSTVEAAELAAKLDENQKSTLPLPGQVDFINGGPPCQGFSGMNRFSHGSWSKVQCEMILAFLSFADYFRPKYFLLENVKKFVTYNKGRTFQLTMASLLEMGYQVRFGILEAGTYGVSQPRKRVIIWAASPEEVLPEWPEPMHVFDNPGSKISLPRGLRYDAGCNTKFGAPFRSITVRDTIGDLPPVENGESKINKEYGTTPASWFQKKIRGNMSVLTDHICKGLNELNLIRCKKIPKRPGADWRDLPDENVTLSNGLVEKLRPLALSKTAKNHNEWKGLYGRLDWQGNLPISITDPQPMGKVGMCFHPEQDRIITVRECARSQGFPDSYEFSGTTKHKHRQIGNAVPPPLAFALGRKLKEALYLKSSLQHQS.

Positions 1-24 are enriched in basic and acidic residues; sequence MEMETKAGKQKKRSVDSDDDVSKE. The disordered stretch occupies residues 1-31; sequence MEMETKAGKQKKRSVDSDDDVSKERRPKRAA. K583 participates in a covalent cross-link: Glycyl lysine isopeptide (Lys-Gly) (interchain with G-Cter in ubiquitin). The disordered stretch occupies residues 641–668; that stretch reads ENVEEEELEEVEEEDENEEDDPEENELE. Over residues 642–668 the composition is skewed to acidic residues; sequence NVEEEELEEVEEEDENEEDDPEENELE. BAH domains are found at residues 715-849 and 916-1033; these read DVVV…FSLP and TTLK…KQFP. An SAM-dependent MTase C5-type domain is found at 1078–1512; that stretch reads LATLDIFAGC…RKLKEALYLK (435 aa). C1183 is an active-site residue.

It belongs to the class I-like SAM-binding methyltransferase superfamily. C5-methyltransferase family. As to expression, expressed at low levels in vegetative and floral organs.

It localises to the nucleus. It carries out the reaction a 2'-deoxycytidine in DNA + S-adenosyl-L-methionine = a 5-methyl-2'-deoxycytidine in DNA + S-adenosyl-L-homocysteine + H(+). Its function is as follows. Maintains chromatin CpG methylation that plays a role in genomic imprinting, regulation of embryogenesis and seed viability. Required for proper patterns of CG DNA methylation in dividing cells. The polypeptide is DNA (cytosine-5)-methyltransferase 4 (MET4) (Arabidopsis thaliana (Mouse-ear cress)).